A 155-amino-acid chain; its full sequence is Cell division protein SepF (155 aa).

Basic and acidic residues predominate over residues 22-46 (RYVEEPEQRDERPALEKGRAPKEKQ). Residues 22-54 (RYVEEPEQRDERPALEKGRAPKEKQTAGMEQNQ) form a disordered region.

Belongs to the SepF family. Homodimer. Interacts with FtsZ.

It is found in the cytoplasm. Cell division protein that is part of the divisome complex and is recruited early to the Z-ring. Probably stimulates Z-ring formation, perhaps through the cross-linking of FtsZ protofilaments. Its function overlaps with FtsA. The polypeptide is Cell division protein SepF (Shouchella clausii (strain KSM-K16) (Alkalihalobacillus clausii)).